A 309-amino-acid polypeptide reads, in one-letter code: Ribonuclease Z (309 aa).

The Zn(2+) site is built by His63, His65, Asp67, His68, His145, Asp216, and His274. Asp67 acts as the Proton acceptor in catalysis.

Belongs to the RNase Z family. Homodimer. It depends on Zn(2+) as a cofactor.

The enzyme catalyses Endonucleolytic cleavage of RNA, removing extra 3' nucleotides from tRNA precursor, generating 3' termini of tRNAs. A 3'-hydroxy group is left at the tRNA terminus and a 5'-phosphoryl group is left at the trailer molecule.. Its function is as follows. Zinc phosphodiesterase, which displays some tRNA 3'-processing endonuclease activity. Probably involved in tRNA maturation, by removing a 3'-trailer from precursor tRNA. The protein is Ribonuclease Z of Streptococcus pyogenes serotype M1.